The chain runs to 401 residues: Imidazolonepropionase (401 aa).

The Fe(3+) site is built by H70 and H72. Residues H70 and H72 each contribute to the Zn(2+) site. 4-imidazolone-5-propanoate-binding residues include R79, Y142, and H175. Y142 contacts N-formimidoyl-L-glutamate. A Fe(3+)-binding site is contributed by H238. H238 provides a ligand contact to Zn(2+). Q241 lines the 4-imidazolone-5-propanoate pocket. D313 contributes to the Fe(3+) binding site. D313 serves as a coordination point for Zn(2+). N-formimidoyl-L-glutamate is bound by residues N315 and G317. Residue T318 coordinates 4-imidazolone-5-propanoate.

This sequence belongs to the metallo-dependent hydrolases superfamily. HutI family. Zn(2+) is required as a cofactor. It depends on Fe(3+) as a cofactor.

Its subcellular location is the cytoplasm. It catalyses the reaction 4-imidazolone-5-propanoate + H2O = N-formimidoyl-L-glutamate. Its pathway is amino-acid degradation; L-histidine degradation into L-glutamate; N-formimidoyl-L-glutamate from L-histidine: step 3/3. In terms of biological role, catalyzes the hydrolytic cleavage of the carbon-nitrogen bond in imidazolone-5-propanoate to yield N-formimidoyl-L-glutamate. It is the third step in the universal histidine degradation pathway. The sequence is that of Imidazolonepropionase from Xanthomonas oryzae pv. oryzae (strain MAFF 311018).